The chain runs to 30 residues: Cysteine-rich venom protein mossambin (30 aa).

The segment at 1 to 30 (NVDFNSESTRRKKKQNEIVDLHNSLRRTVN) is disordered.

The protein belongs to the CRISP family. In terms of processing, contains 8 disulfide bonds. In terms of tissue distribution, expressed by the venom gland.

It localises to the secreted. In terms of biological role, inhibits calcium-activated potassium channels (KCa), voltage-gated potassium channel (Kv), and the calcium release channel/ryanodine receptor (RyR). The protein is Cysteine-rich venom protein mossambin of Naja mossambica (Mozambique spitting cobra).